We begin with the raw amino-acid sequence, 153 residues long: 6,7-dimethyl-8-ribityllumazine synthase (153 aa).

5-amino-6-(D-ribitylamino)uracil is bound by residues Phe22, 56 to 58 (AFE), and 80 to 82 (TVI). 85–86 (ST) serves as a coordination point for (2S)-2-hydroxy-3-oxobutyl phosphate. Catalysis depends on His88, which acts as the Proton donor. A 5-amino-6-(D-ribitylamino)uracil-binding site is contributed by Phe113. Arg127 lines the (2S)-2-hydroxy-3-oxobutyl phosphate pocket.

This sequence belongs to the DMRL synthase family. Forms an icosahedral capsid composed of 60 subunits, arranged as a dodecamer of pentamers.

The enzyme catalyses (2S)-2-hydroxy-3-oxobutyl phosphate + 5-amino-6-(D-ribitylamino)uracil = 6,7-dimethyl-8-(1-D-ribityl)lumazine + phosphate + 2 H2O + H(+). It participates in cofactor biosynthesis; riboflavin biosynthesis; riboflavin from 2-hydroxy-3-oxobutyl phosphate and 5-amino-6-(D-ribitylamino)uracil: step 1/2. In terms of biological role, catalyzes the formation of 6,7-dimethyl-8-ribityllumazine by condensation of 5-amino-6-(D-ribitylamino)uracil with 3,4-dihydroxy-2-butanone 4-phosphate. This is the penultimate step in the biosynthesis of riboflavin. The polypeptide is 6,7-dimethyl-8-ribityllumazine synthase (Actinobacillus pleuropneumoniae (Haemophilus pleuropneumoniae)).